Consider the following 221-residue polypeptide: Ras-related protein Rab-27A (221 aa).

S2 carries the post-translational modification N-acetylserine. At S2 the chain carries Phosphoserine. Residue 16–24 (GDSGVGKTS) coordinates GTP. Residues 38–46 (FITTVGIDF) carry the Effector region motif. GTP-binding positions include 74–78 (DTAGQ), 133–136 (NKSD), and 163–165 (SAA). C123 and C188 form a disulfide bridge. Residues C219 and C221 are each lipidated (S-geranylgeranyl cysteine). C221 bears the Cysteine methyl ester mark.

Belongs to the small GTPase superfamily. Rab family. In terms of assembly, binds SYTL1, SYTL2, SLAC2B, MYRIP, SYTL3, SYTL4, SYTL5 and MLPH. Interacts with UNC13D. Interacts with RPH3A and RPH3A. Does not interact with the BLOC-3 complex (heterodimer of HPS1 and HPS4). Interacts (GDP-bound form preferentially) with DENND10. In terms of tissue distribution, detected in melanocytes. Expressed abundantly in the stomach and is predominantly localized at the apical region of gastric-surface mucus cells. Also expressed in the thymus and lung.

The protein localises to the membrane. The protein resides in the melanosome. It is found in the late endosome. It localises to the lysosome. It catalyses the reaction GTP + H2O = GDP + phosphate + H(+). Its activity is regulated as follows. Regulated by guanine nucleotide exchange factors (GEFs) which promote the exchange of bound GDP for free GTP, GTPase activating proteins (GAPs) which increase the GTP hydrolysis activity, and GDP dissociation inhibitors which inhibit the dissociation of the nucleotide from the GTPase. Activated by GEFs such as DENND10. Small GTPase which cycles between active GTP-bound and inactive GDP-bound states. In its active state, binds to a variety of effector proteins to regulate homeostasis of late endocytic pathway, including endosomal positioning, maturation and secretion. Plays a role in cytotoxic granule exocytosis in lymphocytes. Required for both granule maturation and granule docking and priming at the immunologic synapse. The protein is Ras-related protein Rab-27A (Rab27a) of Mus musculus (Mouse).